A 322-amino-acid polypeptide reads, in one-letter code: Solute carrier family 35 member B1 (322 aa).

Transmembrane regions (helical) follow at residues 12–32, 51–71, 85–105, 136–156, 168–188, 210–230, 243–263, and 285–305; these read LRLP…GILQ, FALT…KILI, WLYA…NSAL, YPLA…LFMY, TVGF…LTGV, LWST…WEFL, ILLF…TVVY, and VILF…LVFL. The Di-lysine motif signature appears at 318 to 322; that stretch reads KKTSH.

It belongs to the nucleotide-sugar transporter family. SLC35B subfamily.

It is found in the endoplasmic reticulum membrane. It catalyses the reaction ADP(in) + ATP(out) = ADP(out) + ATP(in). It carries out the reaction UDP(out) + ATP(in) = UDP(in) + ATP(out). The catalysed reaction is UTP(out) + ATP(in) = UTP(in) + ATP(out). The enzyme catalyses dATP(out) + ATP(in) = dATP(in) + ATP(out). Its function is as follows. ATP:ADP antiporter that catalyzes the exchange of ATP and ADP across the endoplasmic reticulum (ER) membrane. Imports ATP from the cytosol to the ER lumen and exports ADP in the opposite direction. Regulates ER energy metabolism and protein biogenesis. Appears to be part of a calcium-dependent ER to cytosol low energy response axis, where calcium efflux from ER to the cytosol triggers ATP import into the ER lumen to maintain sufficient ATP supply. Provides ATP to ER chaperone HSPA5 that drives protein folding and trafficking in the ER. Can transport dATP, UTP or UDP in exchange for ATP, but the physiological relevance of this process remains to be established. This chain is Solute carrier family 35 member B1 (Slc35b1), found in Mus musculus (Mouse).